The following is a 94-amino-acid chain: Cystatin-A1 (94 aa).

Positions 45 to 49 (QLVAG) match the Secondary area of contact motif.

This sequence belongs to the cystatin family.

Its subcellular location is the cytoplasm. Functionally, intracellular thiol proteinase inhibitor. Inhibits papain, but not cathepsin B. The sequence is that of Cystatin-A1 (cpiA) from Dictyostelium discoideum (Social amoeba).